The sequence spans 434 residues: Glutamyl-tRNA reductase (434 aa).

Substrate is bound by residues 52-55 (TCNR), serine 115, 120-122 (ETQ), and glutamine 126. The Nucleophile role is filled by cysteine 53. An NADP(+)-binding site is contributed by 195–200 (GAGEMI).

This sequence belongs to the glutamyl-tRNA reductase family. In terms of assembly, homodimer.

The catalysed reaction is (S)-4-amino-5-oxopentanoate + tRNA(Glu) + NADP(+) = L-glutamyl-tRNA(Glu) + NADPH + H(+). It functions in the pathway porphyrin-containing compound metabolism; protoporphyrin-IX biosynthesis; 5-aminolevulinate from L-glutamyl-tRNA(Glu): step 1/2. Catalyzes the NADPH-dependent reduction of glutamyl-tRNA(Glu) to glutamate 1-semialdehyde (GSA). This is Glutamyl-tRNA reductase from Cupriavidus metallidurans (strain ATCC 43123 / DSM 2839 / NBRC 102507 / CH34) (Ralstonia metallidurans).